The sequence spans 601 residues: Glutamine--fructose-6-phosphate aminotransferase [isomerizing] (601 aa).

Residue Cys2 is the Nucleophile; for GATase activity of the active site. The Glutamine amidotransferase type-2 domain occupies 2–218 (CGIVGYIGYD…DHEIVIVKKD (217 aa)). SIS domains are found at residues 284-423 (IIND…EHGR) and 453-591 (IATD…VDKP). Lys596 acts as the For Fru-6P isomerization activity in catalysis.

As to quaternary structure, homodimer.

Its subcellular location is the cytoplasm. The enzyme catalyses D-fructose 6-phosphate + L-glutamine = D-glucosamine 6-phosphate + L-glutamate. Its function is as follows. Catalyzes the first step in hexosamine metabolism, converting fructose-6P into glucosamine-6P using glutamine as a nitrogen source. This chain is Glutamine--fructose-6-phosphate aminotransferase [isomerizing], found in Staphylococcus aureus (strain COL).